Here is a 261-residue protein sequence, read N- to C-terminus: MSGLAFKVVIPARYASTRLPAKPLLDLGGKPMVVRVAERARLSGADEIWVATDHLEVRAAAEAHEVAALMTRSDHATGTDRLAEVVEQRGWAGDTIIVNVQGDEPLIEPEVIIQTARQLAASGADIATVAHPITDAADFFNPNVVKVVCRADGDAAYFSRAPIPYARDHFAKEDGGETLPANFPAYRHVGLYAYRASFLKAYAGLMPAPTEHFESLEQLRALWHGYRISVTLIDAAPAPGVDTPEDAERMRKLFDRANNCE.

This sequence belongs to the KdsB family.

The protein localises to the cytoplasm. It catalyses the reaction 3-deoxy-alpha-D-manno-oct-2-ulosonate + CTP = CMP-3-deoxy-beta-D-manno-octulosonate + diphosphate. It participates in nucleotide-sugar biosynthesis; CMP-3-deoxy-D-manno-octulosonate biosynthesis; CMP-3-deoxy-D-manno-octulosonate from 3-deoxy-D-manno-octulosonate and CTP: step 1/1. The protein operates within bacterial outer membrane biogenesis; lipopolysaccharide biosynthesis. In terms of biological role, activates KDO (a required 8-carbon sugar) for incorporation into bacterial lipopolysaccharide in Gram-negative bacteria. In Dechloromonas aromatica (strain RCB), this protein is 3-deoxy-manno-octulosonate cytidylyltransferase.